The sequence spans 434 residues: Salicylate hydroxylase (434 aa).

Arginine 9 to glutamate 38 contacts FAD.

In terms of assembly, monomer. The cofactor is FAD.

The catalysed reaction is salicylate + NADH + O2 + 2 H(+) = catechol + CO2 + NAD(+) + H2O. Its pathway is aromatic compound metabolism; naphthalene degradation. The sequence is that of Salicylate hydroxylase (nahG) from Pseudomonas putida (Arthrobacter siderocapsulatus).